An 820-amino-acid chain; its full sequence is Ribosome biogenesis protein ERB1 (820 aa).

Residues 1–111 (MVRSRSNSVK…SDAGDDEVDP (111 aa)) are disordered. The segment covering 9 to 19 (VKKDLKRKVDE) has biased composition (basic and acidic residues). A compositionally biased stretch (acidic residues) spans 20–48 (PVDVQDEFDVEGLIDEGDSDDEDEAEQEV). Basic and acidic residues predominate over residues 53–64 (VTKDKKNTSKTE). A compositionally biased stretch (acidic residues) spans 65–110 (NEEDADDESDSDAELEALIGEEEDLSGSELEDELAYFSDAGDDEVD). Residues 282-395 (RFIPSKHEAK…LRHVPGYSES (114 aa)) form a required for interaction with NOP7 region. The tract at residues 395–431 (SVRERFERSLDLYLAPRVRKNKLNIDPDSLIPDLPSP) is required for interaction with YTM1. WD repeat units follow at residues 447–486 (GHKG…ELYR) and 495–535 (AQDD…FDIE). A disordered region spans residues 545–585 (GWGFAEGGREQQDIDTKGLDDDADSDSDDETGHVKKKSPPA). Over residues 551 to 564 (GGREQQDIDTKGLD) the composition is skewed to basic and acidic residues. WD repeat units lie at residues 604-646 (TATK…SQSP), 649-687 (KSKG…MAKK), 690-729 (PGAR…KPYK), 733-773 (YHEK…DMMT), and 789-820 (KSGL…LWTT).

It belongs to the WD repeat BOP1/ERB1 family. In terms of assembly, component of the NOP7 complex, composed of ERB1, NOP7 and YTM1. The complex is held together by ERB1, which interacts with NOP7 via its N-terminal domain and with YTM1 via a high-affinity interaction between the seven-bladed beta-propeller domains of the 2 proteins. The NOP7 complex associates with the 66S pre-ribosome.

It is found in the nucleus. The protein resides in the nucleolus. The protein localises to the nucleoplasm. Its function is as follows. Component of the NOP7 complex, which is required for maturation of the 25S and 5.8S ribosomal RNAs and formation of the 60S ribosome. This Yarrowia lipolytica (strain CLIB 122 / E 150) (Yeast) protein is Ribosome biogenesis protein ERB1.